Reading from the N-terminus, the 484-residue chain is Catalase (484 aa).

At Met53 the chain carries Methionine sulfone. Residues His54 and Asn127 contribute to the active site. Heme is bound at residue Tyr337.

Homotetramer. The cofactor is heme. NADP(+) is required as a cofactor.

It is found in the cytoplasm. It carries out the reaction 2 H2O2 = O2 + 2 H2O. Decomposes hydrogen peroxide into water and oxygen; serves to protect cells from the toxic effects of hydrogen peroxide. This is Catalase (katA) from Proteus mirabilis.